A 538-amino-acid polypeptide reads, in one-letter code: Syncytin-2 (538 aa).

The first 15 residues, 1-15 (MGLLLLLLILTPLLA), serve as a signal peptide directing secretion. Topologically, residues 16–478 (AYCHPDFRLL…GWLNWEGTWK (463 aa)) are extracellular. Residues 43 to 46 (CWLC) carry the CXXC motif. 3 disulfide bridges follow: C43–C46, C43–C439, and C431–C438. N-linked (GlcNAc...) asparagine glycans are attached at residues N146, N177, N220, N241, N247, N312, and N332. Residues 354 to 374 (LIPLLVGLGIVGSAGTGIAGI) form a fusion peptide region. Residues 414–430 (LQNRRGLDMLTAAQGGI) carry the CKS-17 motif. Positions 431–439 (CLALDEKCC) match the CX6CC motif. The N-linked (GlcNAc...) asparagine glycan is linked to N443. A helical membrane pass occupies residues 479 to 499 (WFSWVLPFTGPLVSLLLLLLF). The Cytoplasmic segment spans residues 500–538 (GPCLLNLITQFVSSRLQATKLQMKLNKRVHPRNSQESPF).

The protein belongs to the gamma type-C retroviral envelope protein family. HERV class-I FRD env subfamily. In terms of assembly, the surface and transmembrane proteins form a heterodimer. They are attached by non-covalent interactions or by a labile interchain disulfide bond. Post-translationally, specific enzymatic cleavages in vivo yield the mature SU and TM proteins. In terms of processing, the CXXC motif is highly conserved across a broad range of retroviral envelope proteins. It is thought to participate in the formation of a labile disulfide bond possibly with the CX6CC motif present in the transmembrane protein.

The protein localises to the virion. Its subcellular location is the cell membrane. Its function is as follows. This endogenous retroviral envelope protein has retained its original fusogenic properties and participates in trophoblast fusion and the formation of a syncytium during placenta morphogenesis. The interaction with MFSD2A is apparently important for this process. Functionally, endogenous envelope proteins may have kept, lost or modified their original function during evolution but this one can still make pseudotypes with MLV, HIV-1 or SIV-1 virions and confer infectivity. Retroviral envelope proteins mediate receptor recognition and membrane fusion during early infection. The surface protein mediates receptor recognition, while the transmembrane protein anchors the envelope heterodimer to the viral membrane through one transmembrane domain. The other hydrophobic domain, called fusion peptide, mediates fusion of the viral membrane with the target cell membrane. This is Syncytin-2 (ERVFRD-1) from Callithrix jacchus (White-tufted-ear marmoset).